We begin with the raw amino-acid sequence, 472 residues long: Mitochondrial substrate carrier family protein C (472 aa).

Residues 1–189 (MVLNENDKEF…ASSLRNTITY (189 aa)) lie on the Mitochondrial intermembrane side of the membrane. EF-hand domains lie at 6-41 (NDKEFVKKLFDSLDKDNNGKLTREEIKEGFFKLRIP), 42-70 (SSEKDIESFLTNVDKDKDGSVSFKEFEDF), 73-108 (ENIKKLKIVFEELDTNKSGTLDIHEIEESIKKLNIP), and 110-145 (YSEQELIRLFHRIDKNRDNQIDFNEWRELLVLLPNS). Ca(2+) is bound by residues aspartate 19, aspartate 21, asparagine 23, lysine 25, glutamate 30, aspartate 55, aspartate 57, aspartate 59, serine 61, glutamate 66, aspartate 86, asparagine 88, serine 90, threonine 92, glutamate 97, aspartate 123, asparagine 125, aspartate 127, glutamine 129, and glutamate 134. Solcar repeat units lie at residues 184–268 (RNTI…VKKL), 276–362 (LTSA…LKHK), and 375–461 (GQLL…FKKA). Residues 190-207 (MLAGSVAGFASRTSTAPL) form a helical membrane-spanning segment. The Mitochondrial matrix portion of the chain corresponds to 208 to 242 (ERVKIMCQLNHGKPISLISAFKACYKDGGIKGFFR). The helical transmembrane segment at 243 to 263 (GNLANIIKVSPESAVKFGTYE) threads the bilayer. Residues 264 to 281 (YVKKLFAENDCELTSAQR) lie on the Mitochondrial intermembrane side of the membrane. The chain crosses the membrane as a helical span at residues 282-302 (FISGSVAGVVSHTTLFPLEVV). The Mitochondrial matrix portion of the chain corresponds to 303-330 (RLRLSAEIAGTYNGIFDCFKKIAISEKS). Residues 331-351 (IRPFYRGLGASITATIPHSGV) traverse the membrane as a helical segment. Residues 352 to 377 (NMMVYEFLKHKVIKMTGNEFPTAGQL) lie on the Mitochondrial intermembrane side of the membrane. The chain crosses the membrane as a helical span at residues 378–398 (LVCASTSSVCGQLVGYPFHVV). Residues 399-441 (KSRLITQGSSVNQEKYTGLFDGLTKIIKKEGPIGLYKGIVPSF) are Mitochondrial matrix-facing. The chain crosses the membrane as a helical span at residues 442–462 (MKSIPSHSITFIVYEGFKKAF). The Mitochondrial intermembrane portion of the chain corresponds to 463–472 (DVNLKEKKHH).

The protein belongs to the mitochondrial carrier (TC 2.A.29) family.

It is found in the mitochondrion inner membrane. In terms of biological role, calcium-dependent mitochondrial solute carrier. Mitochondrial solute carriers shuttle metabolites, nucleotides, and cofactors through the mitochondrial inner membrane. The polypeptide is Mitochondrial substrate carrier family protein C (mcfC) (Dictyostelium discoideum (Social amoeba)).